The following is a 1445-amino-acid chain: CD109 antigen (1445 aa).

The signal sequence occupies residues 1–21 (MQGPPLLTAAHLLCVCTAALA). Asparagine 68, asparagine 118, asparagine 247, asparagine 279, asparagine 365, asparagine 419, asparagine 513, and asparagine 645 each carry an N-linked (GlcNAc...) asparagine glycan. Positions 593 to 702 (DKSVNLMNAS…TWIWLDTNMG (110 aa)) are bait region (approximate). The isoglutamyl cysteine thioester (Cys-Gln) cross-link spans 921-924 (CGEQ). Asparagine 1086 and asparagine 1355 each carry an N-linked (GlcNAc...) asparagine glycan. Alanine 1420 carries GPI-anchor amidated alanine lipidation. The propeptide at 1421 to 1445 (SGSHHHSSVIFIFCFKLLYFMELWL) is removed in mature form.

It belongs to the protease inhibitor I39 (alpha-2-macroglobulin) family. As to quaternary structure, heterodimer; disulfide-linked. Interacts with TGFB1 and TGFBR1. Forms a heteromeric complex with TGFBR1, TGFBR2 and TGFBR3 in a ligand-independent manner. N-glycosylated. In terms of processing, 2 forms of 150 (p150) and 120 kDa (p120) exist due to proteolytic degradation from a 180 kDa form. In terms of tissue distribution, widely expressed with high level in uterus, aorta, heart, lung, trachea, placenta and in fetal heart, kidney, liver, spleen and lung. Expressed by CD34(+) acute myeloid leukemia cell lines, T-cell lines, activated T-lymphoblasts, endothelial cells and activated platelets. Isoform 4 is expressed in placenta. Isoform 1 is expressed in keratinocytes and placenta.

The protein localises to the cell membrane. Functionally, modulates negatively TGFB1 signaling in keratinocytes. This chain is CD109 antigen (CD109), found in Homo sapiens (Human).